Here is a 238-residue protein sequence, read N- to C-terminus: Ribosomal RNA large subunit methyltransferase E (238 aa).

G76, W78, D99, D115, and D139 together coordinate S-adenosyl-L-methionine. Residue K179 is the Proton acceptor of the active site.

The protein belongs to the class I-like SAM-binding methyltransferase superfamily. RNA methyltransferase RlmE family.

The protein localises to the cytoplasm. It carries out the reaction uridine(2552) in 23S rRNA + S-adenosyl-L-methionine = 2'-O-methyluridine(2552) in 23S rRNA + S-adenosyl-L-homocysteine + H(+). In terms of biological role, specifically methylates the uridine in position 2552 of 23S rRNA at the 2'-O position of the ribose in the fully assembled 50S ribosomal subunit. This chain is Ribosomal RNA large subunit methyltransferase E, found in Rhodopseudomonas palustris (strain BisB18).